The following is a 974-amino-acid chain: Localization factor PodJL (974 aa).

3 coiled-coil regions span residues 81 to 163, 218 to 320, and 375 to 469; these read DEVG…EAAG, VARL…SAQA, and QAQA…LEAA. 2 disordered regions span residues 460 to 497 and 589 to 611; these read SEAQ…SPFE and AAAR…KKEK. Residues 589 to 598 are compositionally biased toward low complexity; the sequence is AAARAAAASE. The helical transmembrane segment at 642–662 threads the bilayer; sequence ALVVFAAAGALGAGVGGLLLL. 3 Sel1-like repeats span residues 757–793, 794–829, and 830–865; these read PAAQ…NGGD, PRAM…DMGL, and VDSQ…RAGD.

Post-translationally, two isoforms exist, the full-length translation product PodJL and a C-terminal truncated form PodJS. Both appear during a specific time period of the cell cycle to control different aspects of polar organelle development.

It is found in the membrane. PodJL provides the positional information for the localization of several polar organelles (pili, adhesive holdfast and chemotactic apparatus) by recruiting structural (CpaE) and regulatory (PleC) proteins to a specific cell pole. The sequence is that of Localization factor PodJL (podJ) from Caulobacter vibrioides (strain ATCC 19089 / CIP 103742 / CB 15) (Caulobacter crescentus).